Reading from the N-terminus, the 95-residue chain is Defensin-1 (95 aa).

Residues 1–19 form the signal peptide; the sequence is MKIYFIVGLLFMAMVAIMA. Residues 20–43 constitute a propeptide that is removed on maturation; it reads APVEDEFEPLEHFENEERADRHRR. Cystine bridges form between cysteine 46–cysteine 74, cysteine 60–cysteine 79, and cysteine 64–cysteine 81. A Phenylalanine amide modification is found at phenylalanine 94.

It localises to the secreted. Its function is as follows. Found in royal jelly and in hemolymph, potent antibacterial protein against Gram-positive bacteria at low concentration. The protein is Defensin-1 of Apis mellifera carnica (Carniolan honeybee).